The chain runs to 449 residues: XK-related protein 2 (449 aa).

10 helical membrane-spanning segments follow: residues 35-55, 68-88, 98-118, 174-194, 204-224, 241-261, 269-289, 306-326, 357-377, and 382-402; these read FSIL…LYMV, TYTF…LIFV, LSLF…EAMI, IQAF…SLIS, LMAF…MLAI, LCIT…LVLF, AVPF…VKFW, VGTL…NFSC, LVEN…VLLN, and LIAV…LLFF.

This sequence belongs to the XK family.

It is found in the membrane. The sequence is that of XK-related protein 2 (Xkrx) from Mus musculus (Mouse).